The following is a 463-amino-acid chain: Glycine--tRNA ligase (463 aa).

Substrate is bound by residues Arg98 and Glu174. ATP is bound by residues 206–208 (RNE), 216–221 (FRTREF), 290–291 (EL), and 334–337 (GADR). Substrate is bound at residue 221-225 (FEQME). Residue 330-334 (EPSLG) coordinates substrate.

Belongs to the class-II aminoacyl-tRNA synthetase family. Homodimer.

Its subcellular location is the cytoplasm. The enzyme catalyses tRNA(Gly) + glycine + ATP = glycyl-tRNA(Gly) + AMP + diphosphate. Its function is as follows. Catalyzes the attachment of glycine to tRNA(Gly). The sequence is that of Glycine--tRNA ligase from Staphylococcus saprophyticus subsp. saprophyticus (strain ATCC 15305 / DSM 20229 / NCIMB 8711 / NCTC 7292 / S-41).